An 87-amino-acid polypeptide reads, in one-letter code: Type 3 secretion system needle filament protein (87 aa).

The protein belongs to the SctF family. As to quaternary structure, the core secretion machinery of the T3SS is composed of approximately 20 different proteins, including cytoplasmic components, a base, an export apparatus and a needle. This subunit polymerizes and forms the helical needle filament. In Y.enterocolitica E40, the needles are composed of 139 (plus-minus 19) YscF/SctF subunits.

Its subcellular location is the secreted. The protein resides in the cell surface. Its activity is regulated as follows. The secretion and/or polymerization may be controlled by the type III secretion system regulator YopR. Component of the type III secretion system (T3SS), also called injectisome, which is used to inject bacterial effector proteins into eukaryotic host cells. YscF/SctF forms the external needle filament that protrudes from the bacterial surface. The needle is not sufficient by itself for the formation of a pore allowing translocation of the Yop effectors across the host cell membrane. The chain is Type 3 secretion system needle filament protein from Yersinia enterocolitica.